The chain runs to 99 residues: Putative membrane protein insertion efficiency factor (99 aa).

It belongs to the UPF0161 family.

It localises to the cell membrane. Could be involved in insertion of integral membrane proteins into the membrane. The protein is Putative membrane protein insertion efficiency factor of Levilactobacillus brevis (strain ATCC 367 / BCRC 12310 / CIP 105137 / JCM 1170 / LMG 11437 / NCIMB 947 / NCTC 947) (Lactobacillus brevis).